Consider the following 1148-residue polypeptide: Envelopment polyprotein (1148 aa).

The first 23 residues, 1–23 (MGKSSPVCLYLILQGLLLFDTVN), serve as a signal peptide directing secretion. Residues 24 to 496 (AKNLNELKME…PGLHGWATVL (473 aa)) are Lumenal-facing. Cystine bridges form between C34–C159, C68–C165, C117–C136, C141–C146, C183–C193, and C218–C257. A glycan (N-linked (GlcNAc...) asparagine; by host) is linked at N142. N357 carries N-linked (GlcNAc...) asparagine; by host glycosylation. 4 cysteine pairs are disulfide-bonded: C386/C445, C390/C399, C415/C434, and C462/C485. An N-linked (GlcNAc...) asparagine; by host glycan is attached at N409. The helical transmembrane segment at 497 to 517 (LLLTFCFGWVLIPTITMILLK) threads the bilayer. Residues 518–637 (ILIAFAYLCS…LSLFRYRSRF (120 aa)) are Cytoplasmic-facing. Residues 526-543 (CSKYNTDSKFRILVEKVK) form a binding to the ribonucleoprotein region. 2 CCHC-type zinc fingers span residues 555–575 (CEVCQYECETAKELESHRKSC) and 580–601 (CPYCLNPSEATPSALQAHFKVC). 2 binding to the ribonucleoprotein regions span residues 598 to 615 (FKVCKLTSRFQENLKKSL) and 621 to 635 (MQGCYRTLSLFRYRS). Positions 621-644 (MQGCYRTLSLFRYRSRFFVGLVWC) constitute an ITAM domain. The YxxL signature appears at 625–628 (YRTL). Residues 638–658 (FVGLVWCMLLVLELIVWAASA) traverse the membrane as a helical segment. Topologically, residues 659–1115 (ETQNLNDGWT…WVLGVLNGNW (457 aa)) are lumenal. 8 disulfides stabilise this stretch: C745–C780, C749–C787, C761–C894, C775–C905, C790–C913, C816–C825, C833–C842, and C873–C877. The interval 767–787 (YEYETGWGCNPPDCPGVGTGC) is fusion loop. A glycan (N-linked (GlcNAc...) asparagine; by host) is linked at N937. Intrachain disulfides connect C979–C1009, C1002–C1054, C1019–C1024, C1055–C1060, and C1094–C1098. Residues 1116–1136 (MVVAVLIALLILSIFLFALCC) form a helical membrane-spanning segment. A binding to the ribonucleoprotein region spans residues 1131–1148 (LFALCCPRRPSYKKDHKP). Residues 1137–1148 (PRRPSYKKDHKP) are Cytoplasmic-facing.

It belongs to the hantavirus envelope glycoprotein family. Homodimer. Homotetramer; forms heterotetrameric Gn-Gc spikes in the pre-fusion conformation. Interacts (via C-terminus) with the nucleoprotein. Interacts with host TUFM; this interaction contributes to the virus-induced degradation of mitochondria by autophagy, which leads to degradation of host MAVS and inhibition of type I interferon (IFN) responses. Interacts with host MAP1LC3B; this interaction contributes to the virus-induced degradation of mitochondria by autophagy, which leads to degradation of host MAVS and inhibition of type I interferon (IFN) responses. In terms of assembly, homodimer. Homotetramer; forms heterotetrameric Gn-Gc spikes in the pre-fusion conformation. Homotrimer; forms homotrimer in the post-fusion conformation at acidic pH. Interacts (via C-terminus) with the nucleoprotein. Post-translationally, envelope polyprotein precursor is quickly cleaved in vivo just after synthesis, presumably by host signal peptidase.

The protein localises to the virion membrane. It localises to the host cell surface. The protein resides in the host Golgi apparatus membrane. It is found in the host endoplasmic reticulum membrane. Its subcellular location is the host mitochondrion. Functionally, forms homotetramers with glycoprotein C at the surface of the virion. Attaches the virion to host cell receptors including integrin ITGAV/ITGB3. This attachment induces virion internalization predominantly through clathrin-dependent endocytosis. Mediates the assembly and budding of infectious virus particles through its interaction with the nucleocapsid protein and the viral genome. May dysregulate normal immune and endothelial cell responses through an ITAM motif. Translocates to mitochondria, binds to host TUFM and recruits MAP1LC3B. These interactions induce mitochondrial autophagy and therefore destruction of host MAVS leading to inhibition of type I interferon (IFN) responses. Concomitant breakdown of glycoprotein N is apparently prevented by the nucleoprotein that may inhibit Gn-stimulated autophagosome-lysosome fusion. Interacts with the viral genomic RNA. In terms of biological role, forms heterooctamers with glycoprotein N at the surface of the virion. Attaches the virion to host cell receptors including integrin ITGAV/ITGB3. This attachment induces virion internalization predominantly through clathrin-dependent endocytosis. Class II fusion protein that promotes fusion of viral membrane with host endosomal membrane after endocytosis of the virion. This is Envelopment polyprotein (GP) from Homo sapiens (Human).